The sequence spans 87 residues: DNA-directed RNA polymerase subunit omega (87 aa).

The protein belongs to the RNA polymerase subunit omega family. As to quaternary structure, the RNAP catalytic core consists of 2 alpha, 1 beta, 1 beta' and 1 omega subunit. When a sigma factor is associated with the core the holoenzyme is formed, which can initiate transcription.

It catalyses the reaction RNA(n) + a ribonucleoside 5'-triphosphate = RNA(n+1) + diphosphate. Functionally, promotes RNA polymerase assembly. Latches the N- and C-terminal regions of the beta' subunit thereby facilitating its interaction with the beta and alpha subunits. This chain is DNA-directed RNA polymerase subunit omega, found in Pseudomonas putida (strain ATCC 700007 / DSM 6899 / JCM 31910 / BCRC 17059 / LMG 24140 / F1).